Here is a 131-residue protein sequence, read N- to C-terminus: D-ribose pyranase (131 aa).

His20 functions as the Proton donor in the catalytic mechanism. Residues Asp28, His98, and 120-122 (YAN) each bind substrate.

The protein belongs to the RbsD / FucU family. RbsD subfamily. Homodecamer.

The protein localises to the cytoplasm. The catalysed reaction is beta-D-ribopyranose = beta-D-ribofuranose. It participates in carbohydrate metabolism; D-ribose degradation; D-ribose 5-phosphate from beta-D-ribopyranose: step 1/2. In terms of biological role, catalyzes the interconversion of beta-pyran and beta-furan forms of D-ribose. The protein is D-ribose pyranase of Clostridium tetani (strain Massachusetts / E88).